The chain runs to 476 residues: Thymidine phosphorylase (476 aa).

Pro residues predominate over residues 1-11; the sequence is MAAPGTPPPLA. The disordered stretch occupies residues 1 to 26; sequence MAAPGTPPPLAPETAGADSGGGSGEH. Phosphothreonine is present on residues Thr6 and Thr475.

This sequence belongs to the thymidine/pyrimidine-nucleoside phosphorylase family. Homodimer.

It catalyses the reaction thymidine + phosphate = 2-deoxy-alpha-D-ribose 1-phosphate + thymine. It functions in the pathway pyrimidine metabolism; dTMP biosynthesis via salvage pathway; dTMP from thymine: step 1/2. Its function is as follows. Catalyzes the reversible phosphorolysis of thymidine. The produced molecules are then utilized as carbon and energy sources or in the rescue of pyrimidine bases for nucleotide synthesis. The chain is Thymidine phosphorylase (Tymp) from Rattus norvegicus (Rat).